The following is a 509-amino-acid chain: Maturase K (509 aa).

Belongs to the intron maturase 2 family. MatK subfamily.

It is found in the plastid. The protein resides in the chloroplast. Functionally, usually encoded in the trnK tRNA gene intron. Probably assists in splicing its own and other chloroplast group II introns. The protein is Maturase K of Opuntia quimilo (Cactus).